The sequence spans 397 residues: DNA excision repair protein ERCC-8 (397 aa).

5 WD repeats span residues 41–81, 97–137, 184–224, 243–282, and 332–371; these read IHGS…RQPH, VHKY…AADV, GHRQ…GCLL, AHNGKVNGLCFTSDGLHLLTIGTDNRMRLWNSSSGDNTLV, and GHYKSVDCCVFQPNFQELYSGSRDCNILAWVPPSYEPVPD. A phosphoserine mark is found at S391, S392, and S393.

As to quaternary structure, part of the CSA complex (also named DCX(ERCC8) complex), a DCX E3 ubiquitin-protein ligase complex containing ERCC8, RBX1, DDB1 and CUL4A; the CSA complex interacts with RNA polymerase II; upon UV irradiation it interacts with the COP9 signalosome and preferentially with the hyperphosphorylated form of RNA polymerase II. Interacts with ERCC6/CSB (via CIM motif); promoting recruitment to lesion-stalled RNA polymerase II (Pol II). Interacts with KIAA1530/UVSSA. Interacts with a subunit of RNA polymerase II TFIIH.

It localises to the nucleus. Its subcellular location is the chromosome. The protein localises to the nucleus matrix. Its pathway is protein modification; protein ubiquitination. Its function is as follows. Substrate-recognition component of the CSA complex, a DCX (DDB1-CUL4-X-box) E3 ubiquitin-protein ligase complex, involved in transcription-coupled nucleotide excision repair (TC-NER), a process during which RNA polymerase II-blocking lesions are rapidly removed from the transcribed strand of active genes. Following recruitment to lesion-stalled RNA polymerase II (Pol II), the CSA complex mediates ubiquitination of Pol II subunit POLR2A/RPB1 at 'Lys-1268', a critical TC-NER checkpoint, governing RNA Pol II stability and initiating DNA damage excision by TFIIH recruitment. The CSA complex also promotes the ubiquitination and subsequent proteasomal degradation of ERCC6/CSB in a UV-dependent manner; ERCC6 degradation is essential for the recovery of RNA synthesis after transcription-coupled repair. Also plays a role in DNA double-strand breaks (DSSBs) repair by non-homologous end joining (NHEJ). The protein is DNA excision repair protein ERCC-8 of Mus musculus (Mouse).